The chain runs to 433 residues: Enolase (433 aa).

Position 1 is an N-acetylserine (serine 1). (2R)-2-phosphoglycerate is bound by residues serine 36 and histidine 157. The active-site Proton donor is glutamate 209. Aspartate 244, glutamate 294, and aspartate 319 together coordinate Mn(2+). 3 residues coordinate (2R)-2-phosphoglycerate: lysine 344, arginine 373, and serine 374. Residue lysine 344 is the Proton acceptor of the active site.

The protein belongs to the enolase family. As to quaternary structure, homodimer. Mg(2+) is required as a cofactor.

Its subcellular location is the cytoplasm. It carries out the reaction (2R)-2-phosphoglycerate = phosphoenolpyruvate + H2O. It functions in the pathway carbohydrate degradation; glycolysis; pyruvate from D-glyceraldehyde 3-phosphate: step 4/5. Its activity is regulated as follows. Inhibited by 2-phosphoglycolic acid. The protein is Enolase of Homarus gammarus (European lobster).